The sequence spans 243 residues: Chalcone--flavanone isomerase (243 aa).

The substrate site is built by T50, N115, and S192.

The protein belongs to the chalcone isomerase family.

The enzyme catalyses a chalcone = a flavanone.. It participates in secondary metabolite biosynthesis; flavonoid biosynthesis. Functionally, catalyzes the intramolecular cyclization of bicyclic chalcones into tricyclic (S)-flavanones. Responsible for the isomerization of 4,2',4',6'-tetrahydroxychalcone (also termed chalcone) into naringenin. The sequence is that of Chalcone--flavanone isomerase (CHI) from Ipomoea batatas (Sweet potato).